The primary structure comprises 336 residues: uncharacterized protein (336 aa).

The segment covering 297–316 (KKDLQKSEEEEHPNDDHVYM) has biased composition (basic and acidic residues). Residues 297–336 (KKDLQKSEEEEHPNDDHVYMTEEDDMEKIERGIESLGNGH) form a disordered region.

This is an uncharacterized protein from Invertebrate iridescent virus 6 (IIV-6).